We begin with the raw amino-acid sequence, 458 residues long: Putative long chain fatty acid-CoA ligase VraA (458 aa).

It belongs to the ATP-dependent AMP-binding enzyme family.

The sequence is that of Putative long chain fatty acid-CoA ligase VraA (vraA) from Staphylococcus aureus (strain Mu3 / ATCC 700698).